Reading from the N-terminus, the 247-residue chain is 3-deoxy-manno-octulosonate cytidylyltransferase (247 aa).

It belongs to the KdsB family.

It localises to the cytoplasm. It catalyses the reaction 3-deoxy-alpha-D-manno-oct-2-ulosonate + CTP = CMP-3-deoxy-beta-D-manno-octulosonate + diphosphate. It functions in the pathway nucleotide-sugar biosynthesis; CMP-3-deoxy-D-manno-octulosonate biosynthesis; CMP-3-deoxy-D-manno-octulosonate from 3-deoxy-D-manno-octulosonate and CTP: step 1/1. The protein operates within bacterial outer membrane biogenesis; lipopolysaccharide biosynthesis. Its function is as follows. Activates KDO (a required 8-carbon sugar) for incorporation into bacterial lipopolysaccharide in Gram-negative bacteria. The sequence is that of 3-deoxy-manno-octulosonate cytidylyltransferase from Methylobacterium nodulans (strain LMG 21967 / CNCM I-2342 / ORS 2060).